The chain runs to 519 residues: Ribonuclease Y (519 aa).

Residues 3-23 traverse the membrane as a helical segment; it reads LIEIVLLLVGMAVGAATGFIL. Positions 209 to 272 constitute a KH domain; sequence TVTAVSLPSE…QIAKMALERL (64 aa). In terms of domain architecture, HD spans 335–428; that stretch reads VLQHSMEVAS…VQAADSLSGA (94 aa).

This sequence belongs to the RNase Y family.

The protein localises to the cell membrane. Functionally, endoribonuclease that initiates mRNA decay. This chain is Ribonuclease Y, found in Oleidesulfovibrio alaskensis (strain ATCC BAA-1058 / DSM 17464 / G20) (Desulfovibrio alaskensis).